A 627-amino-acid polypeptide reads, in one-letter code: Chaperone protein DnaK (627 aa).

T197 is modified (phosphothreonine; by autocatalysis). A compositionally biased stretch (low complexity) spans 598 to 611 (AYAKEQGGQQGAAD). Residues 598–627 (AYAKEQGGQQGAADAGKKADDDDVIDAEVE) are disordered. Acidic residues predominate over residues 618–627 (DDDVIDAEVE).

Belongs to the heat shock protein 70 family.

Acts as a chaperone. The sequence is that of Chaperone protein DnaK from Sulfurovum sp. (strain NBC37-1).